Reading from the N-terminus, the 369-residue chain is 2-aminoethylphosphonate--pyruvate transaminase (369 aa).

Lys193 carries the post-translational modification N6-(pyridoxal phosphate)lysine.

Belongs to the class-V pyridoxal-phosphate-dependent aminotransferase family. PhnW subfamily. As to quaternary structure, homodimer. The cofactor is pyridoxal 5'-phosphate.

The catalysed reaction is (2-aminoethyl)phosphonate + pyruvate = phosphonoacetaldehyde + L-alanine. Involved in phosphonate degradation. The protein is 2-aminoethylphosphonate--pyruvate transaminase of Burkholderia pseudomallei (strain 1106a).